A 307-amino-acid chain; its full sequence is 2,4-diacetylphloroglucinol hydrolase (307 aa).

The Zn(2+) site is built by His-142, Glu-173, His-283, and Glu-287.

Belongs to the DAPG/phloretin hydrolase family. It depends on Zn(2+) as a cofactor.

The catalysed reaction is 2,4-diacetylphloroglucinol + H2O = 2-acetylphloroglucinol + acetate. With respect to regulation, activity is strongly reduced by pyoluteorin, an antifungal compound produced by the bacterium. In terms of biological role, hydrolase that specifically degrades the potent antimicrobial compound 2,4-diacetylphloroglucinol (DAPG) to equimolar amounts of mildly toxic monoacetylphloroglucinol (MAPG) and acetate. Does not degrade other compounds with structures similar to DAPG, such as MAPG and triacetylphloroglucinol, suggesting strict substrate specificity. Degradation of DAPG to MAPG may provide an additional means of fine-tuning levels of this antibiotic or may help avoid accumulation of a metabolite that at high levels may become toxic to the producing bacterium. In Pseudomonas protegens (strain DSM 19095 / LMG 27888 / CFBP 6595 / CHA0), this protein is 2,4-diacetylphloroglucinol hydrolase.